Reading from the N-terminus, the 342-residue chain is MVNSNFYRNLGPRKLMAIADFLQDFIEAPKIHEDVAIHDIKILQEASSNDISFLSNIKYSRFLKNTKAAACIVPKDFTGEVNPNTVLLRAENSYFAYGKLIDFFYAPVKSYPAKIMKSAYVAESATIGKNCYVGHNAVIEDNVVIGDDSIIEAGSFIGTGVVIGRNARIESNVSINYSVIGDDVVILSGAKIGQDGFGFSTEKGMHHKIFHTGIVKIGNNVEIGANTTIDRGSLQDTIIEDLCRIDNLVQIGHSVKIGKGSIIVAQAGIAGSSVIGKYCALGGQVGVAGHLYIGDGAQVAAQGGVAQNIEAGKIVGGSPAVPIMDWHRQSIIMKQLINKRSK.

H253 serves as the catalytic Proton acceptor.

It belongs to the transferase hexapeptide repeat family. LpxD subfamily. As to quaternary structure, homotrimer.

It carries out the reaction a UDP-3-O-[(3R)-3-hydroxyacyl]-alpha-D-glucosamine + a (3R)-hydroxyacyl-[ACP] = a UDP-2-N,3-O-bis[(3R)-3-hydroxyacyl]-alpha-D-glucosamine + holo-[ACP] + H(+). The protein operates within bacterial outer membrane biogenesis; LPS lipid A biosynthesis. Its function is as follows. Catalyzes the N-acylation of UDP-3-O-acylglucosamine using 3-hydroxyacyl-ACP as the acyl donor. Is involved in the biosynthesis of lipid A, a phosphorylated glycolipid that anchors the lipopolysaccharide to the outer membrane of the cell. In Rickettsia bellii (strain RML369-C), this protein is UDP-3-O-acylglucosamine N-acyltransferase.